Consider the following 378-residue polypeptide: Beta sliding clamp (378 aa).

It belongs to the beta sliding clamp family. In terms of assembly, forms a ring-shaped head-to-tail homodimer around DNA which binds and tethers DNA polymerases and other proteins to the DNA. The DNA replisome complex has a single clamp-loading complex (3 tau and 1 each of delta, delta', psi and chi subunits) which binds 3 Pol III cores (1 core on the leading strand and 2 on the lagging strand) each with a beta sliding clamp dimer. Additional proteins in the replisome are other copies of gamma, psi and chi, Ssb, DNA helicase and RNA primase.

It is found in the cytoplasm. In terms of biological role, confers DNA tethering and processivity to DNA polymerases and other proteins. Acts as a clamp, forming a ring around DNA (a reaction catalyzed by the clamp-loading complex) which diffuses in an ATP-independent manner freely and bidirectionally along dsDNA. Initially characterized for its ability to contact the catalytic subunit of DNA polymerase III (Pol III), a complex, multichain enzyme responsible for most of the replicative synthesis in bacteria; Pol III exhibits 3'-5' exonuclease proofreading activity. The beta chain is required for initiation of replication as well as for processivity of DNA replication. The chain is Beta sliding clamp (dnaN) from Streptococcus pneumoniae serotype 4 (strain ATCC BAA-334 / TIGR4).